Reading from the N-terminus, the 594-residue chain is UvrABC system protein C (594 aa).

The GIY-YIG domain maps to 13–99 (SSSGVYQYFD…IKQLKPKYNI (87 aa)). Residues 205 to 240 (DRLIKELELKMERLSSNLRFEEALIYRDRIAKIQKI) form the UVR domain.

Belongs to the UvrC family. Interacts with UvrB in an incision complex.

It localises to the cytoplasm. The UvrABC repair system catalyzes the recognition and processing of DNA lesions. UvrC both incises the 5' and 3' sides of the lesion. The N-terminal half is responsible for the 3' incision and the C-terminal half is responsible for the 5' incision. The chain is UvrABC system protein C from Helicobacter pylori (strain J99 / ATCC 700824) (Campylobacter pylori J99).